Consider the following 180-residue polypeptide: Ribulose bisphosphate carboxylase small subunit, chloroplastic 3 (180 aa).

The N-terminal 56 residues, 1 to 56 (MASSLMSNAITAVVGASGAQANMVAPFNGLKSIASFPVTRKSNDITSIASNGGRVQ), are a transit peptide targeting the chloroplast.

It belongs to the RuBisCO small chain family. In terms of assembly, heterohexadecamer of 8 large and 8 small subunits.

The protein localises to the plastid. The protein resides in the chloroplast. RuBisCO catalyzes two reactions: the carboxylation of D-ribulose 1,5-bisphosphate, the primary event in carbon dioxide fixation, as well as the oxidative fragmentation of the pentose substrate. Both reactions occur simultaneously and in competition at the same active site. Although the small subunit is not catalytic it is essential for maximal activity. The chain is Ribulose bisphosphate carboxylase small subunit, chloroplastic 3 from Amaranthus hypochondriacus (Prince-of-Wales feather).